We begin with the raw amino-acid sequence, 274 residues long: Diaminopimelate epimerase (274 aa).

Residues Asn-11, Gln-44, and Asn-64 each coordinate substrate. Cys-73 functions as the Proton donor in the catalytic mechanism. Residues 74-75 (GN), Asn-157, Asn-190, and 208-209 (ER) each bind substrate. Cys-217 serves as the catalytic Proton acceptor. 218–219 (GS) contributes to the substrate binding site.

Belongs to the diaminopimelate epimerase family. As to quaternary structure, homodimer.

The protein resides in the cytoplasm. The enzyme catalyses (2S,6S)-2,6-diaminopimelate = meso-2,6-diaminopimelate. It functions in the pathway amino-acid biosynthesis; L-lysine biosynthesis via DAP pathway; DL-2,6-diaminopimelate from LL-2,6-diaminopimelate: step 1/1. Catalyzes the stereoinversion of LL-2,6-diaminopimelate (L,L-DAP) to meso-diaminopimelate (meso-DAP), a precursor of L-lysine and an essential component of the bacterial peptidoglycan. This Glaesserella parasuis serovar 5 (strain SH0165) (Haemophilus parasuis) protein is Diaminopimelate epimerase.